A 148-amino-acid polypeptide reads, in one-letter code: uncharacterized protein (148 aa).

The disordered stretch occupies residues 122–148 (HNWRKRMGTRRGRHEQSPTSRPRKGPD). Residues 123–134 (NWRKRMGTRRGR) are compositionally biased toward basic residues.

This is an uncharacterized protein from Homo sapiens (Human).